The chain runs to 270 residues: Glutamate 5-kinase (270 aa).

Lys-15 lines the ATP pocket. Residues Ser-55, Asp-142, and Asn-158 each contribute to the substrate site. Residues 178–179 (SD) and 220–226 (TGGMLSK) each bind ATP.

Belongs to the glutamate 5-kinase family.

The protein resides in the cytoplasm. The enzyme catalyses L-glutamate + ATP = L-glutamyl 5-phosphate + ADP. Its pathway is amino-acid biosynthesis; L-proline biosynthesis; L-glutamate 5-semialdehyde from L-glutamate: step 1/2. Functionally, catalyzes the transfer of a phosphate group to glutamate to form L-glutamate 5-phosphate. The chain is Glutamate 5-kinase from Streptococcus uberis (strain ATCC BAA-854 / 0140J).